Here is a 495-residue protein sequence, read N- to C-terminus: UDP-glycosyltransferase 73C6 (495 aa).

UDP-alpha-D-glucose-binding positions include serine 296, 356 to 358, 373 to 381, and 395 to 398; these read SPQ, HCGWNSTLE, and FADQ. The tract at residues 449-475 is disordered; the sequence is SDDAKERRRRAKELGESAHKAVEEGGS. Positions 450–471 are enriched in basic and acidic residues; sequence DDAKERRRRAKELGESAHKAVE.

This sequence belongs to the UDP-glycosyltransferase family. As to expression, expressed in leaves and flowers, and at a very low level in roots.

In terms of biological role, acts as a UDP-glucose:flavonol-3-O-glycoside-7-O-glucosyltransferase. 6- and 7-hydroxyflavone, but not 3- or 5-hydroxyflavone are accepted as substrates. Possesses low quercetin 3-O-glucosyltransferase, 7-O-glucosyltransferase and 4'-O-glucosyltransferase activities in vitro. The chain is UDP-glycosyltransferase 73C6 (UGT73C6) from Arabidopsis thaliana (Mouse-ear cress).